The following is a 1218-amino-acid chain: Cytosolic carboxypeptidase 1 (1218 aa).

Disordered stretches follow at residues 476-512 (VVMK…RVAP) and 590-617 (TEDD…PTLH). Residues 477–499 (VMKERASPKGEEAKEDPKGHDRT) are compositionally biased toward basic and acidic residues. In terms of domain architecture, Peptidase M14 spans 840 to 1130 (YPYTYSTLQM…KFCVGLLRLK (291 aa)). Residues His912, Glu915, and His1009 each coordinate Zn(2+). Residue Glu1094 is the Proton donor/acceptor of the active site. Ser1160 carries the post-translational modification Phosphoserine. Positions 1193-1218 (ENTGDYEPSAQEEALSDSEVSRTHLI) are disordered.

This sequence belongs to the peptidase M14 family. As to quaternary structure, interacts with MYLK. Zn(2+) serves as cofactor. As to expression, widely expressed. Highly expressed in the cerebellum and cortex of adult mouse brain. Expressed at similar levels in both the cerebellum and the cortex throughout all developmental stages. Also expressed in sciatic nerve transection, spinal motor neurons undergoing axon regeneration, testis, heart, eye, lung, pancreas, intestine, stomach, pituitary, spleen, adrenal, kidney and in developing brain. Expression in cranial motor nuclei is the same as that observed in uninjured primary motor neurons. Expression is prevalent in sensory neurons and hippocampal CA3 neurons in addition to regenerating motor neurons.

It localises to the cytoplasm. The protein resides in the cytosol. The protein localises to the nucleus. Its subcellular location is the mitochondrion. It catalyses the reaction (L-glutamyl)(n+1)-gamma-L-glutamyl-L-glutamyl-[protein] + H2O = (L-glutamyl)(n)-gamma-L-glutamyl-L-glutamyl-[protein] + L-glutamate. It carries out the reaction C-terminal L-alpha-aminoacyl-L-glutamyl-L-glutamyl-[tubulin] + H2O = C-terminal L-alpha-aminoacyl-L-glutamyl-[tubulin] + L-glutamate. In terms of biological role, metallocarboxypeptidase that mediates protein deglutamylation of tubulin and non-tubulin target proteins. Catalyzes the removal of polyglutamate side chains present on the gamma-carboxyl group of glutamate residues within the C-terminal tail of alpha- and beta-tubulin. Specifically cleaves tubulin long-side-chains, while it is not able to remove the branching point glutamate. Also catalyzes the removal of polyglutamate residues from the carboxy-terminus of alpha-tubulin as well as non-tubulin proteins such as MYLK. Involved in KLF4 deglutamylation which promotes KLF4 proteasome-mediated degradation, thereby negatively regulating cell pluripotency maintenance and embryogenesis. In Mus musculus (Mouse), this protein is Cytosolic carboxypeptidase 1.